The following is a 468-amino-acid chain: Cysteine--tRNA ligase (468 aa).

A Zn(2+)-binding site is contributed by Cys33. Residues 35-45 (ATVQGLPHIGH) carry the 'HIGH' region motif. Residues Cys211, His236, and Glu240 each coordinate Zn(2+). The 'KMSKS' region signature appears at 267-271 (KMSKS). Lys270 is an ATP binding site.

The protein belongs to the class-I aminoacyl-tRNA synthetase family. As to quaternary structure, monomer. Requires Zn(2+) as cofactor.

Its subcellular location is the cytoplasm. The catalysed reaction is tRNA(Cys) + L-cysteine + ATP = L-cysteinyl-tRNA(Cys) + AMP + diphosphate. This is Cysteine--tRNA ligase from Mycolicibacterium paratuberculosis (strain ATCC BAA-968 / K-10) (Mycobacterium paratuberculosis).